Reading from the N-terminus, the 205-residue chain is Golgi to ER traffic protein 1 (205 aa).

Over 1–3 (MDY) the chain is Lumenal. A helical transmembrane segment spans residues 4–24 (WILLVLAFLVADKSWHLTGLL). Over 25 to 96 (ATKLTSPERL…ATKARLAKLK (72 aa)) the chain is Cytoplasmic. Positions 32-96 (ERLQQLIRER…ATKARLAKLK (65 aa)) form a coiled coil. The chain crosses the membrane as a helical span at residues 97–117 (LLVVTVPFTALKFYKGKLPVY). Residues 118–156 (ALPKGMFPRFIEGTLEHGWLYMALAPLNMKQFSEGASVA) lie on the Lumenal side of the membrane. The helical transmembrane segment at 157-173 (VSLGIWLFALLRVLGAI) threads the bilayer. Residues 174 to 205 (EFVLETLREQNPQVATETAKVHARTAQAASAN) are Cytoplasmic-facing.

The protein belongs to the WRB/GET1 family. In terms of assembly, component of the Golgi to ER traffic (GET) complex, which is composed of GET1, GET2 and GET3. Within the complex, GET1 and GET2 form a heterotetramer which is stabilized by phosphatidylinositol binding and which binds to the GET3 homodimer.

Its subcellular location is the endoplasmic reticulum membrane. It is found in the golgi apparatus membrane. Functionally, required for the post-translational delivery of tail-anchored (TA) proteins to the endoplasmic reticulum. Together with GET2, acts as a membrane receptor for soluble GET3, which recognizes and selectively binds the transmembrane domain of TA proteins in the cytosol. The GET complex cooperates with the HDEL receptor ERD2 to mediate the ATP-dependent retrieval of resident ER proteins that contain a C-terminal H-D-E-L retention signal from the Golgi to the ER. The sequence is that of Golgi to ER traffic protein 1 from Eremothecium gossypii (strain ATCC 10895 / CBS 109.51 / FGSC 9923 / NRRL Y-1056) (Yeast).